We begin with the raw amino-acid sequence, 156 residues long: Cytochrome c-type biogenesis protein CcmE 1 (156 aa).

Over 1–8 the chain is Cytoplasmic; the sequence is MNATRKQR. Residues 9–29 form a helical; Signal-anchor for type II membrane protein membrane-spanning segment; sequence LWLVIGVLAAAALAVTLIVFA. At 30 to 156 the chain is on the periplasmic side; that stretch reads LQRNMSYLFT…ATVAPLTAPR (127 aa). Heme is bound by residues histidine 123 and tyrosine 127.

Belongs to the CcmE/CycJ family.

Its subcellular location is the cell inner membrane. In terms of biological role, heme chaperone required for the biogenesis of c-type cytochromes. Transiently binds heme delivered by CcmC and transfers the heme to apo-cytochromes in a process facilitated by CcmF and CcmH. This chain is Cytochrome c-type biogenesis protein CcmE 1, found in Xanthomonas axonopodis pv. citri (strain 306).